The primary structure comprises 293 residues: Cell wall protein PGA31 (293 aa).

The signal sequence occupies residues 1 to 18; the sequence is MKFLTAASLLTLSSSALA. An N-linked (GlcNAc...) asparagine glycan is attached at Asn-131. The tract at residues 161–187 is disordered; that stretch reads ESASSSSSSAAPEPTASSSEAPKETPV. Over residues 163-180 the composition is skewed to low complexity; the sequence is ASSSSSSAAPEPTASSSE. Asn-190 carries an N-linked (GlcNAc...) asparagine glycan. A disordered region spans residues 233–262; it reads VPSKTASSEAAPPKTTVDSVSKPAPSGKKP. A lipid anchor (GPI-anchor amidated glycine) is attached at Gly-271. The propeptide at 272–293 is removed in mature form; that stretch reads AANALTGGSVAIAVAAAIGLVF.

This sequence belongs to the SRP1/TIP1 family. Post-translationally, the GPI-anchor is attached to the protein in the endoplasmic reticulum and serves to target the protein to the cell surface. There, the glucosamine-inositol phospholipid moiety is cleaved off and the GPI-modified mannoprotein is covalently attached via its lipidless GPI glycan remnant to the 1,6-beta-glucan of the outer cell wall layer.

The protein resides in the secreted. It localises to the cell wall. It is found in the membrane. Component of the cell wall involved in virulence which plays a role in the relationship between C.albicans and the host. Involved in the regulation or assembly of chitin within the cell wall. This Candida albicans (strain SC5314 / ATCC MYA-2876) (Yeast) protein is Cell wall protein PGA31 (PGA31).